The sequence spans 229 residues: Uracil-DNA glycosylase (229 aa).

The active-site Proton acceptor is D64.

It belongs to the uracil-DNA glycosylase (UDG) superfamily. UNG family.

The protein localises to the cytoplasm. It carries out the reaction Hydrolyzes single-stranded DNA or mismatched double-stranded DNA and polynucleotides, releasing free uracil.. Its function is as follows. Excises uracil residues from the DNA which can arise as a result of misincorporation of dUMP residues by DNA polymerase or due to deamination of cytosine. This is Uracil-DNA glycosylase from Klebsiella pneumoniae subsp. pneumoniae (strain ATCC 700721 / MGH 78578).